Here is a 609-residue protein sequence, read N- to C-terminus: Dihydroxy-acid dehydratase (609 aa).

D82 lines the Mg(2+) pocket. [2Fe-2S] cluster is bound at residue C123. The Mg(2+) site is built by D124 and K125. At K125 the chain carries N6-carboxylysine. C192 lines the [2Fe-2S] cluster pocket. E489 is a Mg(2+) binding site. S515 acts as the Proton acceptor in catalysis.

Belongs to the IlvD/Edd family. As to quaternary structure, homodimer. [2Fe-2S] cluster is required as a cofactor. The cofactor is Mg(2+).

The enzyme catalyses (2R)-2,3-dihydroxy-3-methylbutanoate = 3-methyl-2-oxobutanoate + H2O. The catalysed reaction is (2R,3R)-2,3-dihydroxy-3-methylpentanoate = (S)-3-methyl-2-oxopentanoate + H2O. It functions in the pathway amino-acid biosynthesis; L-isoleucine biosynthesis; L-isoleucine from 2-oxobutanoate: step 3/4. The protein operates within amino-acid biosynthesis; L-valine biosynthesis; L-valine from pyruvate: step 3/4. Functions in the biosynthesis of branched-chain amino acids. Catalyzes the dehydration of (2R,3R)-2,3-dihydroxy-3-methylpentanoate (2,3-dihydroxy-3-methylvalerate) into 2-oxo-3-methylpentanoate (2-oxo-3-methylvalerate) and of (2R)-2,3-dihydroxy-3-methylbutanoate (2,3-dihydroxyisovalerate) into 2-oxo-3-methylbutanoate (2-oxoisovalerate), the penultimate precursor to L-isoleucine and L-valine, respectively. The chain is Dihydroxy-acid dehydratase from Azobacteroides pseudotrichonymphae genomovar. CFP2.